The following is a 46-amino-acid chain: Large ribosomal subunit protein bL34 (46 aa).

Positions 25–46 (TASGRQVLRRRRAKGRYRLAVS) are disordered. Residues 31 to 46 (VLRRRRAKGRYRLAVS) are compositionally biased toward basic residues.

The protein belongs to the bacterial ribosomal protein bL34 family.

This chain is Large ribosomal subunit protein bL34, found in Synechococcus sp. (strain JA-3-3Ab) (Cyanobacteria bacterium Yellowstone A-Prime).